Reading from the N-terminus, the 546-residue chain is MAAKDVVFGDSARAKMVEGVNILANAVKVTLGPKGRNVVLERSFGGPTVTKDGVSVAKEIELKDKLQNMGAQMVKEVASKTSDNAGDGTTTATVLAQSIVREGMKYVASGMNPMDLKRGIDKAVAAAVEELKKISKPCTTNKEIAQVGAISANSDSSIGDRIAEAMDKVGKEGVITVEDGKSLADELDVVEGMQFDRGYLSPYFINNPDKQVAVLENPFVLLHDKKVSNIRDLLPVLEQVAKAGRPLLIIAEDVEGEALATLVVNNIRGILKTVAVKAPGFGDRRKAMLEDIAILTGGQVIAEETGLTLEKATLAELGQAKRIEVGKENTTIIDGAGEAVNIEARVKQIRTQIEEATSDYDREKLQERVAKLAGGVAVIKVGAATEVEMKEKKARVEDALHATRAAVEEGIVPGGGVALIRARTAIAGLTGVNADQNAGIKIVLRAMEEPLRQIVTNGGEEASVVVAAVAAGKGNYGYNAATGEYVDMVEAGVVDPTKVTRTALQNAASVAGLLLTTDAAVAELPKEDAPMPGGMPGGMGGMGMDM.

Residues 30 to 33 (TLGP), K51, 87 to 91 (DGTTT), G415, 479 to 481 (NAA), and D495 contribute to the ATP site. A disordered region spans residues 526–546 (KEDAPMPGGMPGGMGGMGMDM). Residues 534–546 (GMPGGMGGMGMDM) are compositionally biased toward gly residues.

It belongs to the chaperonin (HSP60) family. In terms of assembly, forms a cylinder of 14 subunits composed of two heptameric rings stacked back-to-back. Interacts with the co-chaperonin GroES.

It localises to the cytoplasm. The catalysed reaction is ATP + H2O + a folded polypeptide = ADP + phosphate + an unfolded polypeptide.. In terms of biological role, together with its co-chaperonin GroES, plays an essential role in assisting protein folding. The GroEL-GroES system forms a nano-cage that allows encapsulation of the non-native substrate proteins and provides a physical environment optimized to promote and accelerate protein folding. This Burkholderia pseudomallei (strain K96243) protein is Chaperonin GroEL 1.